The chain runs to 239 residues: 4-hydroxy-tetrahydrodipicolinate reductase (239 aa).

Residues 8-13 (GSTGKM), 78-80 (GTT), and 102-105 (SANM) contribute to the NAD(+) site. Residue H134 is the Proton donor/acceptor of the active site. H135 serves as a coordination point for (S)-2,3,4,5-tetrahydrodipicolinate. K138 acts as the Proton donor in catalysis. 144-145 (GT) contacts (S)-2,3,4,5-tetrahydrodipicolinate.

This sequence belongs to the DapB family.

It localises to the cytoplasm. The enzyme catalyses (S)-2,3,4,5-tetrahydrodipicolinate + NAD(+) + H2O = (2S,4S)-4-hydroxy-2,3,4,5-tetrahydrodipicolinate + NADH + H(+). It catalyses the reaction (S)-2,3,4,5-tetrahydrodipicolinate + NADP(+) + H2O = (2S,4S)-4-hydroxy-2,3,4,5-tetrahydrodipicolinate + NADPH + H(+). Its pathway is amino-acid biosynthesis; L-lysine biosynthesis via DAP pathway; (S)-tetrahydrodipicolinate from L-aspartate: step 4/4. Its function is as follows. Catalyzes the conversion of 4-hydroxy-tetrahydrodipicolinate (HTPA) to tetrahydrodipicolinate. The protein is 4-hydroxy-tetrahydrodipicolinate reductase of Rickettsia peacockii (strain Rustic).